Here is a 483-residue protein sequence, read N- to C-terminus: Probable cytosol aminopeptidase (483 aa).

Mn(2+) contacts are provided by Lys-244 and Asp-249. The active site involves Lys-256. Mn(2+) contacts are provided by Asp-267, Asp-326, and Glu-328. Residue Arg-330 is part of the active site.

Belongs to the peptidase M17 family. Requires Mn(2+) as cofactor.

The protein localises to the cytoplasm. It catalyses the reaction Release of an N-terminal amino acid, Xaa-|-Yaa-, in which Xaa is preferably Leu, but may be other amino acids including Pro although not Arg or Lys, and Yaa may be Pro. Amino acid amides and methyl esters are also readily hydrolyzed, but rates on arylamides are exceedingly low.. The catalysed reaction is Release of an N-terminal amino acid, preferentially leucine, but not glutamic or aspartic acids.. In terms of biological role, presumably involved in the processing and regular turnover of intracellular proteins. Catalyzes the removal of unsubstituted N-terminal amino acids from various peptides. This Campylobacter jejuni subsp. jejuni serotype O:2 (strain ATCC 700819 / NCTC 11168) protein is Probable cytosol aminopeptidase.